A 789-amino-acid chain; its full sequence is UPF0313 protein VC_1711 (789 aa).

The Radical SAM core domain occupies Ala-363 to Ala-642. [4Fe-4S] cluster-binding residues include Cys-377, Cys-381, and Cys-384. Residues Pro-669 to Arg-789 form a disordered region. Positions Lys-683–His-698 are enriched in basic residues. 3 stretches are compositionally biased toward polar residues: residues Arg-716–Gly-726, Pro-733–Ser-763, and Arg-778–Arg-789.

It belongs to the UPF0313 family. [4Fe-4S] cluster is required as a cofactor.

The polypeptide is UPF0313 protein VC_1711 (Vibrio cholerae serotype O1 (strain ATCC 39315 / El Tor Inaba N16961)).